A 198-amino-acid chain; its full sequence is Probable nicotinate-nucleotide adenylyltransferase (198 aa).

This sequence belongs to the NadD family.

It carries out the reaction nicotinate beta-D-ribonucleotide + ATP + H(+) = deamido-NAD(+) + diphosphate. The protein operates within cofactor biosynthesis; NAD(+) biosynthesis; deamido-NAD(+) from nicotinate D-ribonucleotide: step 1/1. Catalyzes the reversible adenylation of nicotinate mononucleotide (NaMN) to nicotinic acid adenine dinucleotide (NaAD). The sequence is that of Probable nicotinate-nucleotide adenylyltransferase from Chlorobium limicola (strain DSM 245 / NBRC 103803 / 6330).